The primary structure comprises 132 residues: MSTDEPKTDAQWRAELSPEQYRILREQGTERAFTGEYWDHHANGEYRCAACGAPLFSSSAKFDSGTGWPSFYEALNAQAVRERTDTTHGMVRTEALCSRCNSHLGHVFPDGPPPTGLRYCINSASLSFHPKD.

One can recognise a MsrB domain in the interval 9–131 (DAQWRAELSP…NSASLSFHPK (123 aa)). Zn(2+) is bound by residues C48, C51, C97, and C100. The active-site Nucleophile is the C120.

This sequence belongs to the MsrB Met sulfoxide reductase family. Zn(2+) serves as cofactor.

It catalyses the reaction L-methionyl-[protein] + [thioredoxin]-disulfide + H2O = L-methionyl-(R)-S-oxide-[protein] + [thioredoxin]-dithiol. The sequence is that of Peptide methionine sulfoxide reductase MsrB from Thiobacillus denitrificans (strain ATCC 25259 / T1).